The primary structure comprises 185 residues: 16S rRNA aminocarboxypropyltransferase (185 aa).

5 residues coordinate S-adenosyl-L-methionine: Thr19, Ile69, Leu93, Tyr108, and Thr112.

Belongs to the TDD superfamily. TSR3 family.

It localises to the cytoplasm. It carries out the reaction an N(1)-methylpseudouridine in rRNA + S-adenosyl-L-methionine = N(1)-methyl-N(3)-[(3S)-3-amino-3-carboxypropyl]pseudouridine in rRNA + S-methyl-5'-thioadenosine + H(+). Functionally, aminocarboxypropyltransferase that catalyzes the aminocarboxypropyl transfer on pseudouridine corresponding to position 914 in M.jannaschii 16S rRNA. It constitutes the last step in biosynthesis of the hypermodified N1-methyl-N3-(3-amino-3-carboxypropyl) pseudouridine (m1acp3-Psi). The polypeptide is 16S rRNA aminocarboxypropyltransferase (Vulcanisaeta distributa (strain DSM 14429 / JCM 11212 / NBRC 100878 / IC-017)).